We begin with the raw amino-acid sequence, 238 residues long: Large ribosomal subunit protein uL1 (238 aa).

The segment at 217–238 (TNGPGVPVDETIQKNYADDAEA) is disordered.

The protein belongs to the universal ribosomal protein uL1 family. As to quaternary structure, part of the 50S ribosomal subunit.

In terms of biological role, binds directly to 23S rRNA. The L1 stalk is quite mobile in the ribosome, and is involved in E site tRNA release. Functionally, protein L1 is also a translational repressor protein, it controls the translation of the L11 operon by binding to its mRNA. This is Large ribosomal subunit protein uL1 from Corynebacterium urealyticum (strain ATCC 43042 / DSM 7109).